The chain runs to 336 residues: Torsin-1B (336 aa).

The signal sequence occupies residues 1–24 (MLRAGWLRGAAALALLLAARVVAA). An N-linked (GlcNAc...) asparagine glycan is attached at asparagine 64. 109-116 (GWAGTGKN) is a binding site for ATP. Residue asparagine 165 is glycosylated (N-linked (GlcNAc...) asparagine).

It belongs to the ClpA/ClpB family. Torsin subfamily. In terms of assembly, homohexamer. Interacts with TOR1A; the interaction may be specific of neural tissues. Interacts with TOR1AIP1; TOR1AIP1 is required for TOR1B location on the nuclear membrane. Interacts (ATP-bound) with TOR1AIP2; important for endoplasmic reticulum integrity. Post-translationally, N-glycosylated. Widely expressed with low levels in brain.

It localises to the endoplasmic reticulum lumen. The protein resides in the nucleus membrane. The catalysed reaction is ATP + H2O = ADP + phosphate + H(+). In terms of biological role, may serve as a molecular chaperone assisting in the proper folding of secreted and/or membrane proteins. Plays a role in non-neural cells nuclear envelope and endoplasmic reticulum integrity. May have a redundant function with TOR1A in non-neural tissues. This chain is Torsin-1B (TOR1B), found in Homo sapiens (Human).